We begin with the raw amino-acid sequence, 206 residues long: uncharacterized protein (206 aa).

The chain crosses the membrane as a helical span at residues 166–186 (FYTGLSVIVGGATALALGLFF).

The protein localises to the membrane. This is an uncharacterized protein from Dictyostelium discoideum (Social amoeba).